A 482-amino-acid polypeptide reads, in one-letter code: MEDYGSYSTPLTARYASAEMSHLFSREMRINTWRQLWLNLAIAEKQLGLTQITDEAIEQLKAHVKITAPEFEIAAKEEKRQRHDVMAHIYTYGLAAPAASGIIHLGATSCFVTDNADLIFLRSAMDLLIPKLVNVINRLSQWSLRYKDIPTLGFTHYQPAQLTTVGKRATLWIQELLWDLRNFVRARNDIGFRGVKGTTGTQASFLALFEGDHAKVEELDKLVAKLSGFDNVYPVTGQTYDRKIDIDVLQPLASFGATAHKIATDIRLLANLKEVEEPFEAGQIGSSAMAYKRNPMRCERICSQARYIMNLIPNALNTASVQWFERTLDDSSNRRSLLPEAFLFTDSVLKILLNVISGMVIYPKVIQKHIRAELPFMATENIIMAMTKHGASRHECHEQIRVLSHQAGRVVKEEGGDNDLIERIKNTPYFAPIYDELDSLLDASTFVGRAPEQTESFVNKDVSQALAPFKSMITEEKVDLAV.

Substrate contacts are provided by residues 14-15 (RY), 82-84 (RHD), and 108-109 (TS). His-156 serves as the catalytic Proton donor/acceptor. Residue Gln-238 coordinates substrate. Residue Ser-286 is the Proton donor/acceptor of the active site. The substrate site is built by Arg-300, Arg-326, Ser-331, and Arg-335.

It belongs to the lyase 1 family. Adenylosuccinate lyase subfamily. As to quaternary structure, homotetramer. Residues from neighboring subunits contribute catalytic and substrate-binding residues to each active site.

It carries out the reaction N(6)-(1,2-dicarboxyethyl)-AMP = fumarate + AMP. The catalysed reaction is (2S)-2-[5-amino-1-(5-phospho-beta-D-ribosyl)imidazole-4-carboxamido]succinate = 5-amino-1-(5-phospho-beta-D-ribosyl)imidazole-4-carboxamide + fumarate. It functions in the pathway purine metabolism; AMP biosynthesis via de novo pathway; AMP from IMP: step 2/2. Its pathway is purine metabolism; IMP biosynthesis via de novo pathway; 5-amino-1-(5-phospho-D-ribosyl)imidazole-4-carboxamide from 5-amino-1-(5-phospho-D-ribosyl)imidazole-4-carboxylate: step 2/2. In Schizosaccharomyces pombe (strain 972 / ATCC 24843) (Fission yeast), this protein is Adenylosuccinate lyase (ade8).